A 705-amino-acid chain; its full sequence is Elongation factor G (705 aa).

Residues 8–290 enclose the tr-type G domain; sequence HRYRNIGIMA…GVIHLLPSPA (283 aa). Residues 17–24, 88–92, and 142–145 contribute to the GTP site; these read AHIDAGKT, DTPGH, and NKMD.

The protein belongs to the TRAFAC class translation factor GTPase superfamily. Classic translation factor GTPase family. EF-G/EF-2 subfamily.

It is found in the cytoplasm. Functionally, catalyzes the GTP-dependent ribosomal translocation step during translation elongation. During this step, the ribosome changes from the pre-translocational (PRE) to the post-translocational (POST) state as the newly formed A-site-bound peptidyl-tRNA and P-site-bound deacylated tRNA move to the P and E sites, respectively. Catalyzes the coordinated movement of the two tRNA molecules, the mRNA and conformational changes in the ribosome. This chain is Elongation factor G, found in Xylella fastidiosa (strain M23).